We begin with the raw amino-acid sequence, 1076 residues long: DNA-directed RNA polymerase subunit beta (1076 aa).

Belongs to the RNA polymerase beta chain family. As to quaternary structure, in plastids the minimal PEP RNA polymerase catalytic core is composed of four subunits: alpha, beta, beta', and beta''. When a (nuclear-encoded) sigma factor is associated with the core the holoenzyme is formed, which can initiate transcription.

The protein localises to the plastid. It catalyses the reaction RNA(n) + a ribonucleoside 5'-triphosphate = RNA(n+1) + diphosphate. DNA-dependent RNA polymerase catalyzes the transcription of DNA into RNA using the four ribonucleoside triphosphates as substrates. The chain is DNA-directed RNA polymerase subunit beta from Euglena longa (Euglenophycean alga).